Reading from the N-terminus, the 137-residue chain is MFQKLLLSVFIILLMDVGERVLTFNLLRHCNLCSHYDGFKCRNGMKSCWKFDLWTQNRTCTTENYYYYDRFTGLYLFRYAKLNCKPCAPGMYQMFHDLLRETFCCIDRNYCNDGTANLDTSSILIEDMNQKKELNDD.

The signal sequence occupies residues 1–20 (MFQKLLLSVFIILLMDVGER). The 87-residue stretch at 28 to 114 (RHCNLCSHYD…CIDRNYCNDG (87 aa)) folds into the UPAR/Ly6 domain. 5 disulfide bridges follow: cysteine 30-cysteine 60, cysteine 33-cysteine 41, cysteine 48-cysteine 84, cysteine 87-cysteine 104, and cysteine 105-cysteine 111. Asparagine 57 carries an N-linked (GlcNAc...) asparagine glycan.

This sequence belongs to the PATE family. As to expression, strongly expressed in the epididymis, including the initial segment, caput, corpus and cauda regions. Weakly expressed in prostate.

The protein resides in the secreted. The sequence is that of Prostate and testis expressed protein 13 from Mus musculus (Mouse).